Consider the following 130-residue polypeptide: Peptide methionine sulfoxide reductase MsrB (130 aa).

Residues 8–130 (LEEWRSMLDP…NSVCLDLVPR (123 aa)) form the MsrB domain. 4 residues coordinate Zn(2+): cysteine 47, cysteine 50, cysteine 96, and cysteine 99. The active-site Nucleophile is the cysteine 119.

Belongs to the MsrB Met sulfoxide reductase family. Requires Zn(2+) as cofactor.

It carries out the reaction L-methionyl-[protein] + [thioredoxin]-disulfide + H2O = L-methionyl-(R)-S-oxide-[protein] + [thioredoxin]-dithiol. This chain is Peptide methionine sulfoxide reductase MsrB, found in Pseudomonas fluorescens (strain ATCC BAA-477 / NRRL B-23932 / Pf-5).